Reading from the N-terminus, the 209-residue chain is Large ribosomal subunit protein eL13 (209 aa).

The protein belongs to the eukaryotic ribosomal protein eL13 family. In terms of assembly, component of the 60S large ribosomal subunit (LSU).

It localises to the cytoplasm. Its function is as follows. Component of the ribosome, a large ribonucleoprotein complex responsible for the synthesis of proteins in the cell. The small ribosomal subunit (SSU) binds messenger RNAs (mRNAs) and translates the encoded message by selecting cognate aminoacyl-transfer RNA (tRNA) molecules. The large subunit (LSU) contains the ribosomal catalytic site termed the peptidyl transferase center (PTC), which catalyzes the formation of peptide bonds, thereby polymerizing the amino acids delivered by tRNAs into a polypeptide chain. The nascent polypeptides leave the ribosome through a tunnel in the LSU and interact with protein factors that function in enzymatic processing, targeting, and the membrane insertion of nascent chains at the exit of the ribosomal tunnel. As part of the LSU, it is probably required for its formation and the maturation of rRNAs. The chain is Large ribosomal subunit protein eL13 (rpl13) from Dictyostelium discoideum (Social amoeba).